We begin with the raw amino-acid sequence, 376 residues long: Glucose-1-phosphate adenylyltransferase (376 aa).

Alpha-D-glucose 1-phosphate-binding positions include tyrosine 101, glycine 166, 181–182, and serine 192; that span reads EK.

This sequence belongs to the bacterial/plant glucose-1-phosphate adenylyltransferase family. As to quaternary structure, homotetramer.

The enzyme catalyses alpha-D-glucose 1-phosphate + ATP + H(+) = ADP-alpha-D-glucose + diphosphate. The protein operates within glycan biosynthesis; glycogen biosynthesis. Its function is as follows. Involved in the biosynthesis of ADP-glucose, a building block required for the elongation reactions to produce glycogen. Catalyzes the reaction between ATP and alpha-D-glucose 1-phosphate (G1P) to produce pyrophosphate and ADP-Glc. This chain is Glucose-1-phosphate adenylyltransferase, found in Bacillus thuringiensis (strain Al Hakam).